Here is a 179-residue protein sequence, read N- to C-terminus: Large ribosomal subunit protein uL5 (179 aa).

Belongs to the universal ribosomal protein uL5 family. In terms of assembly, part of the 50S ribosomal subunit; part of the 5S rRNA/L5/L18/L25 subcomplex. Contacts the 5S rRNA and the P site tRNA. Forms a bridge to the 30S subunit in the 70S ribosome.

This is one of the proteins that bind and probably mediate the attachment of the 5S RNA into the large ribosomal subunit, where it forms part of the central protuberance. In the 70S ribosome it contacts protein S13 of the 30S subunit (bridge B1b), connecting the 2 subunits; this bridge is implicated in subunit movement. Contacts the P site tRNA; the 5S rRNA and some of its associated proteins might help stabilize positioning of ribosome-bound tRNAs. The polypeptide is Large ribosomal subunit protein uL5 (Burkholderia mallei (strain NCTC 10247)).